Here is a 175-residue protein sequence, read N- to C-terminus: Large ribosomal subunit protein uL6 (175 aa).

Belongs to the universal ribosomal protein uL6 family. In terms of assembly, part of the 50S ribosomal subunit.

This protein binds to the 23S rRNA, and is important in its secondary structure. It is located near the subunit interface in the base of the L7/L12 stalk, and near the tRNA binding site of the peptidyltransferase center. The protein is Large ribosomal subunit protein uL6 of Xylella fastidiosa (strain 9a5c).